We begin with the raw amino-acid sequence, 641 residues long: Chaperone protein DnaK (641 aa).

The residue at position 199 (Thr199) is a Phosphothreonine; by autocatalysis. Positions 577–590 are enriched in basic and acidic residues; the sequence is KGDNKDEIETRTQK. Positions 577–641 are disordered; it reads KGDNKDEIET…EFEEVDDKKK (65 aa). Residues 617 to 626 are compositionally biased toward low complexity; sequence GAEQASAQQD. Residues 627-641 show a composition bias toward acidic residues; it reads DVVDAEFEEVDDKKK.

The protein belongs to the heat shock protein 70 family.

Its function is as follows. Acts as a chaperone. The protein is Chaperone protein DnaK of Thioalkalivibrio sulfidiphilus (strain HL-EbGR7).